The chain runs to 147 residues: Large ribosomal subunit protein uL11 (147 aa).

Belongs to the universal ribosomal protein uL11 family. As to quaternary structure, part of the ribosomal stalk of the 50S ribosomal subunit. Interacts with L10 and the large rRNA to form the base of the stalk. L10 forms an elongated spine to which L12 dimers bind in a sequential fashion forming a multimeric L10(L12)X complex. In terms of processing, one or more lysine residues are methylated.

Its function is as follows. Forms part of the ribosomal stalk which helps the ribosome interact with GTP-bound translation factors. In Parabacteroides distasonis (strain ATCC 8503 / DSM 20701 / CIP 104284 / JCM 5825 / NCTC 11152), this protein is Large ribosomal subunit protein uL11.